Consider the following 188-residue polypeptide: FMN-dependent NADPH-azoreductase (188 aa).

The protein belongs to the azoreductase type 2 family. In terms of assembly, homotetramer. Requires FMN as cofactor.

Its function is as follows. Catalyzes the reductive cleavage of azo bond in aromatic azo compounds to the corresponding amines. Requires NADPH, but not NADH, as an electron donor for its activity. The chain is FMN-dependent NADPH-azoreductase (azo1) from Staphylococcus aureus (strain MSSA476).